Consider the following 869-residue polypeptide: Ubiquitin carboxyl-terminal hydrolase 29 (869 aa).

Polar residues-rich tracts occupy residues 104-120 (SSTP…MSSQ) and 140-150 (SLNTTPESGTP). Residues 104 to 226 (SSTPCESQQP…KAVTLREQEK (123 aa)) form a disordered region. The segment covering 187-200 (VNKDIPKENTPDQK) has biased composition (basic and acidic residues). The span at 201 to 212 (KKSRRYYSRNRG) shows a compositional bias: basic residues. Basic and acidic residues predominate over residues 213–226 (GKAEKAVTLREQEK). Positions 289 to 826 (EGFPNLGNTC…SGYIFFYMHN (538 aa)) constitute a USP domain. Catalysis depends on Cys298, which acts as the Nucleophile. Residues 723 to 754 (SQEDPEKDLSRSPELQEDDPHSFAFGSDDSKD) are disordered. His781 functions as the Proton acceptor in the catalytic mechanism.

Belongs to the peptidase C19 family. In terms of tissue distribution, predominantly expressed in brain and testis. Highest expression levels in adult brain, especially in the cerebral cortex and hippocampus, and in the forebrain, face, and limb buds of midgestation mouse embryos.

The protein localises to the cytoplasm. Its subcellular location is the perinuclear region. It carries out the reaction Thiol-dependent hydrolysis of ester, thioester, amide, peptide and isopeptide bonds formed by the C-terminal Gly of ubiquitin (a 76-residue protein attached to proteins as an intracellular targeting signal).. In terms of biological role, deubiquitinase involved in innate antiviral immunity by mediating 'Lys-48'-linked deubiquitination of CGAS, thereby promoting its stabilization. The chain is Ubiquitin carboxyl-terminal hydrolase 29 from Mus musculus (Mouse).